Here is a 636-residue protein sequence, read N- to C-terminus: Eukaryotic peptide chain release factor GTP-binding subunit ERF3A (636 aa).

Gly residues-rich tracts occupy residues 1 to 16 and 103 to 116; these read MDPS…GGGS and AAGG…GAGG. Disordered regions lie at residues 1 to 54 and 90 to 206; these read MDPS…AAVA and LRGP…PPGA. Residues 121–138 show a composition bias toward polar residues; that stretch reads VESSQDQSCEGSNSTVSM. The segment covering 183–193 has biased composition (acidic residues); that stretch reads STQEMMEEEEE. One can recognise a tr-type G domain in the interval 209–435; it reads KEHVNVVFIG…DNLPNFNRSV (227 aa). The G1 stretch occupies residues 218–225; it reads GHVDAGKS. 221–226 lines the GTP pocket; the sequence is DAGKST. The tract at residues 274–278 is G2; it reads GKTVE. The interval 295 to 298 is G3; it reads DAPG. Residues 357 to 360 and 399 to 401 each bind GTP; these read NKMD and SGL. Residues 357 to 360 form a G4 region; sequence NKMD. The G5 stretch occupies residues 399-401; the sequence is SGL.

It belongs to the TRAFAC class translation factor GTPase superfamily. Classic translation factor GTPase family. ERF3 subfamily. Component of the eRF1-eRF3-GTP ternary complex, composed of ETF1/ERF1 and ERF3 (GSPT1/ERF3A or GSPT2/ERF3B) and GTP. Component of the transient SURF (SMG1-UPF1-eRF1-eRF3) complex. The ETF1-GSPT1 complex interacts with JMJD4. Interacts with PABPC1. Interacts with SHFL.

The catalysed reaction is GTP + H2O = GDP + phosphate + H(+). Its function is as follows. GTPase component of the eRF1-eRF3-GTP ternary complex, a ternary complex that mediates translation termination in response to the termination codons UAA, UAG and UGA. GSPT1/ERF3A mediates ETF1/ERF1 delivery to stop codons: The eRF1-eRF3-GTP complex binds to a stop codon in the ribosomal A-site. GTP hydrolysis by GSPT1/ERF3A induces a conformational change that leads to its dissociation, permitting ETF1/ERF1 to accommodate fully in the A-site. Component of the transient SURF complex which recruits UPF1 to stalled ribosomes in the context of nonsense-mediated decay (NMD) of mRNAs containing premature stop codons. Required for SHFL-mediated translation termination which inhibits programmed ribosomal frameshifting (-1PRF) of mRNA from viruses and cellular genes. The chain is Eukaryotic peptide chain release factor GTP-binding subunit ERF3A (Gspt1) from Mus musculus (Mouse).